Reading from the N-terminus, the 224-residue chain is 7-cyano-7-deazaguanine synthase (224 aa).

9 to 19 is a binding site for ATP; it reads LSGGLDSATAL. Zn(2+) is bound by residues cysteine 188, cysteine 198, cysteine 201, and cysteine 204.

It belongs to the QueC family. Zn(2+) serves as cofactor.

The enzyme catalyses 7-carboxy-7-deazaguanine + NH4(+) + ATP = 7-cyano-7-deazaguanine + ADP + phosphate + H2O + H(+). It functions in the pathway purine metabolism; 7-cyano-7-deazaguanine biosynthesis. In terms of biological role, catalyzes the ATP-dependent conversion of 7-carboxy-7-deazaguanine (CDG) to 7-cyano-7-deazaguanine (preQ(0)). This Thiobacillus denitrificans (strain ATCC 25259 / T1) protein is 7-cyano-7-deazaguanine synthase.